Consider the following 467-residue polypeptide: Acyl-CoA-binding domain-containing protein 5 (467 aa).

The ACB domain occupies 8 to 97; it reads HQTRFEAAVS…MKKIIETMPV (90 aa). An acyl-CoA is bound by residues 19–28, 39–43, lysine 65, and tyrosine 84; these read IQSLPKNGSF and YSFYK. Disordered stretches follow at residues 119-204, 219-240, and 304-376; these read KHGR…IVLN, TPLP…EGEP, and ITEN…DRGP. Polar residues predominate over residues 125-139; that stretch reads GVTSELGSVLTSTPN. The span at 170-187 shows a compositional bias: acidic residues; that stretch reads DEEDEEDETEHSEEEEKE. Basic and acidic residues-rich tracts occupy residues 312–322 and 335–347; these read ELKDGGEDGKQ and KSEH…ERSL. The segment covering 352–372 has biased composition (gly residues); that stretch reads GGEGSRSGQIGSSGDGDGWGS. The stretch at 382–411 forms a coiled coil; it reads EQIAVVLMRLQEDMQNVLQRLHSLEVQTAS. A helical membrane pass occupies residues 439 to 459; that stretch reads GTLALAVVWPFVVHWLMHVFL.

This sequence belongs to the ATG37 family.

Its subcellular location is the peroxisome membrane. Acyl-CoA binding protein which acts as the peroxisome receptor for pexophagy but is dispensable for aggrephagy and nonselective autophagy. Binds medium- and long-chain acyl-CoA esters. The chain is Acyl-CoA-binding domain-containing protein 5 (acbd5) from Xenopus laevis (African clawed frog).